A 171-amino-acid polypeptide reads, in one-letter code: Voltage-dependent P/Q-type calcium channel subunit alpha-1A (171 aa).

The helical transmembrane segment at 1–11 threads the bilayer; that stretch reads FVTVLGSITDI. Residues 1–171 form an IV repeat; that stretch reads FVTVLGSITD…LMLNLFVAVI (171 aa). Topologically, residues 12 to 18 are extracellular; the sequence is LVTEFGN. Residues 19–37 traverse the membrane as a helical segment; it reads NFINLSFLRLFRAARLIKL. Residues 38–56 lie on the Cytoplasmic side of the membrane; sequence LRQGYTIRILLWTFVQSFK. A helical transmembrane segment spans residues 57-76; sequence ALPYVCLLIAMLFFIYAIIG. Residues 77-143 lie on the Extracellular side of the membrane; it reads MQVFGNIGIE…ENSGIKEDEC (67 aa). Residues 144–168 form a helical membrane-spanning segment; that stretch reads GNEFAYFYFVSFIFLCSFLMLNLFV. Residues 169-171 are Cytoplasmic-facing; the sequence is AVI.

This sequence belongs to the calcium channel alpha-1 subunit (TC 1.A.1.11) family. CACNA1A subfamily. As to quaternary structure, voltage-dependent calcium channels are multisubunit complexes, consisting of alpha-1, alpha-2, beta and delta subunits in a 1:1:1:1 ratio. The channel activity is directed by the pore-forming and voltage-sensitive alpha-1 subunit. In many cases, this subunit is sufficient to generate voltage-sensitive calcium channel activity. The auxiliary subunits beta and alpha-2/delta linked by a disulfide bridge regulate the channel activity.

It is found in the cell membrane. It catalyses the reaction Ca(2+)(in) = Ca(2+)(out). Functionally, the isoform alpha-1A gives rise to P and/or Q-type calcium currents. P/Q-type calcium channels belong to the 'high-voltage activated' (HVA) group. In Gallus gallus (Chicken), this protein is Voltage-dependent P/Q-type calcium channel subunit alpha-1A (CACNA1A).